Reading from the N-terminus, the 416-residue chain is Cytochrome P450 monooxygenase PikC (416 aa).

Substrate is bound by residues Glu-94, 187–191 (AQTAM), and 238–246 (HILLVAGHE). Cys-354 provides a ligand contact to heme.

The protein belongs to the cytochrome P450 family. Heme is required as a cofactor.

The enzyme catalyses narbomycin + 2 reduced [2Fe-2S]-[ferredoxin] + O2 + 2 H(+) = pikromycin + 2 oxidized [2Fe-2S]-[ferredoxin] + H2O. The catalysed reaction is narbomycin + 2 reduced [2Fe-2S]-[ferredoxin] + O2 + 2 H(+) = neopikromycin + 2 oxidized [2Fe-2S]-[ferredoxin] + H2O. It carries out the reaction narbomycin + 4 reduced [2Fe-2S]-[ferredoxin] + 2 O2 + 4 H(+) = novapikromycin + 4 oxidized [2Fe-2S]-[ferredoxin] + 2 H2O. It catalyses the reaction 10-deoxymethymycin + 2 reduced [2Fe-2S]-[ferredoxin] + O2 + 2 H(+) = methymycin + 2 oxidized [2Fe-2S]-[ferredoxin] + H2O. The enzyme catalyses 10-deoxymethymycin + 2 reduced [2Fe-2S]-[ferredoxin] + O2 + 2 H(+) = neomethymycin + 2 oxidized [2Fe-2S]-[ferredoxin] + H2O. The catalysed reaction is 10-deoxymethymycin + 4 reduced [2Fe-2S]-[ferredoxin] + 2 O2 + 4 H(+) = novamethymycin + 4 oxidized [2Fe-2S]-[ferredoxin] + 2 H2O. It participates in antibiotic biosynthesis. Its function is as follows. Catalyzes the hydroxylation of narbomycin to give rise to pikromycin, and of 10-deoxymethymycin (YC-17) to give rise to methymycin and neomethymycin during macrolide antibiotic biosynthesis. In addition, produces low amounts of neopicromycin, novapikromycin and novamethymycin. Requires the participation of a ferredoxin and a ferredoxin reductase for the transfer of electrons from NADPH to the monooxygenase. In Streptomyces venezuelae, this protein is Cytochrome P450 monooxygenase PikC.